The chain runs to 276 residues: uncharacterized protein (276 aa).

An N-terminal signal peptide occupies residues 1-19; it reads MKKWLICSFVLVLLVSFTA. The N-palmitoyl cysteine moiety is linked to residue Cys-20. Cys-20 carries the S-diacylglycerol cysteine lipid modification.

It belongs to the NlpA lipoprotein family.

Its subcellular location is the cell membrane. This is an uncharacterized protein from Bacillus subtilis (strain 168).